Consider the following 271-residue polypeptide: 4-hydroxy-tetrahydrodipicolinate reductase (271 aa).

G8–M13 is an NAD(+) binding site. NADP(+) is bound at residue R35. NAD(+)-binding positions include G100 to T102 and A124 to M127. Residue H157 is the Proton donor/acceptor of the active site. A (S)-2,3,4,5-tetrahydrodipicolinate-binding site is contributed by H158. K161 serves as the catalytic Proton donor. G167 to T168 serves as a coordination point for (S)-2,3,4,5-tetrahydrodipicolinate.

This sequence belongs to the DapB family.

Its subcellular location is the cytoplasm. It catalyses the reaction (S)-2,3,4,5-tetrahydrodipicolinate + NAD(+) + H2O = (2S,4S)-4-hydroxy-2,3,4,5-tetrahydrodipicolinate + NADH + H(+). It carries out the reaction (S)-2,3,4,5-tetrahydrodipicolinate + NADP(+) + H2O = (2S,4S)-4-hydroxy-2,3,4,5-tetrahydrodipicolinate + NADPH + H(+). The protein operates within amino-acid biosynthesis; L-lysine biosynthesis via DAP pathway; (S)-tetrahydrodipicolinate from L-aspartate: step 4/4. Functionally, catalyzes the conversion of 4-hydroxy-tetrahydrodipicolinate (HTPA) to tetrahydrodipicolinate. This Myxococcus xanthus (strain DK1622) protein is 4-hydroxy-tetrahydrodipicolinate reductase.